The primary structure comprises 409 residues: Putative lipoate-protein ligase A (409 aa).

The region spanning 146-330 (GPDNCRLVFY…RFQKTFKVDG (185 aa)) is the BPL/LPL catalytic domain. ATP contacts are provided by residues Arg-188, 193 to 196 (GTVL), and Lys-249. Lys-249 serves as a coordination point for (R)-lipoate.

This sequence belongs to the LplA family. As to quaternary structure, monomer.

It carries out the reaction L-lysyl-[lipoyl-carrier protein] + (R)-lipoate + ATP = N(6)-[(R)-lipoyl]-L-lysyl-[lipoyl-carrier protein] + AMP + diphosphate + H(+). It functions in the pathway protein modification; protein lipoylation via exogenous pathway; protein N(6)-(lipoyl)lysine from lipoate: step 1/2. The protein operates within protein modification; protein lipoylation via exogenous pathway; protein N(6)-(lipoyl)lysine from lipoate: step 2/2. Functionally, catalyzes both the ATP-dependent activation of exogenously supplied lipoate to lipoyl-AMP and the transfer of the activated lipoyl onto the lipoyl domains of lipoate-dependent enzymes. The chain is Putative lipoate-protein ligase A (AIM22) from Saccharomyces cerevisiae (strain YJM789) (Baker's yeast).